A 689-amino-acid polypeptide reads, in one-letter code: Glycine--tRNA ligase beta subunit (689 aa).

Belongs to the class-II aminoacyl-tRNA synthetase family. Tetramer of two alpha and two beta subunits.

The protein resides in the cytoplasm. The catalysed reaction is tRNA(Gly) + glycine + ATP = glycyl-tRNA(Gly) + AMP + diphosphate. This Actinobacillus pleuropneumoniae serotype 5b (strain L20) protein is Glycine--tRNA ligase beta subunit.